Reading from the N-terminus, the 359-residue chain is 3-dehydroquinate synthase (359 aa).

NAD(+) contacts are provided by residues 71–76 (DGEAYK), 105–109 (GVIGD), 129–130 (TT), lysine 142, and lysine 151. Zn(2+) contacts are provided by glutamate 184, histidine 247, and histidine 264.

The protein belongs to the sugar phosphate cyclases superfamily. Dehydroquinate synthase family. Co(2+) is required as a cofactor. Zn(2+) serves as cofactor. It depends on NAD(+) as a cofactor.

It localises to the cytoplasm. The catalysed reaction is 7-phospho-2-dehydro-3-deoxy-D-arabino-heptonate = 3-dehydroquinate + phosphate. It participates in metabolic intermediate biosynthesis; chorismate biosynthesis; chorismate from D-erythrose 4-phosphate and phosphoenolpyruvate: step 2/7. Catalyzes the conversion of 3-deoxy-D-arabino-heptulosonate 7-phosphate (DAHP) to dehydroquinate (DHQ). In Burkholderia ambifaria (strain MC40-6), this protein is 3-dehydroquinate synthase.